We begin with the raw amino-acid sequence, 1425 residues long: B-cell CLL/lymphoma 9 protein (1425 aa).

The segment at 1 to 172 (MHPSNPKVRS…APEPISAQKT (172 aa)) is disordered. Composition is skewed to polar residues over residues 7–21 (KVRSSPSGNTQSSPK) and 34–48 (MSPSGNPQLDSKFSN). A compositionally biased stretch (low complexity) spans 54–63 (GSASQSQPSP). Residues 78–94 (GPGGSMGLKNGAGNGAK) show a composition bias toward gly residues. Composition is skewed to basic and acidic residues over residues 100-112 (ERSISADSFDQRD) and 120-135 (SDIKECNSADHIKSQE). A Phosphoserine modification is found at S104. A compositionally biased stretch (low complexity) spans 144-157 (TPSTATAPRSSTPS). The residue at position 157 (S157) is a Phosphoserine. T172 carries the phosphothreonine modification. Residues 177 to 205 (VYVFSTEMANKAAEAVLKGQVETIVSFHI) are interaction with PYGO1. Residues 207–226 (NISNSKSERSTAPLNTQIPT) show a composition bias toward polar residues. Disordered stretches follow at residues 207–441 (NISN…VPFS) and 577–624 (VPNP…PNPQ). Pro residues-rich tracts occupy residues 232–241 (KPLPQQPPAP) and 256–270 (PTPPIQAPAPKPTAA). Positions 304–320 (GPNSTPNNRAVTPVSQG) are enriched in polar residues. Residue T315 is modified to Phosphothreonine. Phosphoserine occurs at positions 318 and 352. Residues 355-380 (QLEHRERSLQTLRDIQRMLFPDEKEF) show a composition bias toward basic and acidic residues. The segment at 358–374 (HRERSLQTLRDIQRMLF) is interaction with CTNNB1. S686 and S688 each carry phosphoserine. Disordered regions lie at residues 781–1003 (RPFL…LSQN), 1031–1051 (VASSDDDSPPARSPNLPSMNS), 1153–1199 (PHNG…GPGA), and 1252–1275 (PRGEVPGRKQPQGPGPGFSHMQGM). R800 is subject to Asymmetric dimethylarginine. The span at 822–835 (NPSSNPTSLSTAPP) shows a compositional bias: low complexity. K843 is subject to N6-acetyllysine. Over residues 866–890 (TMHQVQSPMLGSPSGNLKSPQTPSQ) the composition is skewed to polar residues. Low complexity predominate over residues 891-902 (LAGMLAGPAAAA). Phosphoserine is present on residues S906 and S916. Residues 936–946 (PKPPLQSPGIP) are compositionally biased toward pro residues. Over residues 1157 to 1175 (PTGGQGNFPGGIGFPGEGP) the composition is skewed to gly residues.

This sequence belongs to the BCL9 family. Binds to beta-catenin (CTNNB1), PYGO1 and PYGO2; the interaction with PYGO1 increases PYGO1 affinity to histone H3 methylated at 'Lys 4'.

The protein resides in the nucleus. Promotes beta-catenin's transcriptional activity. Involved in signal transduction through the Wnt pathway. This chain is B-cell CLL/lymphoma 9 protein (Bcl9), found in Mus musculus (Mouse).